The following is a 168-amino-acid chain: Xanthine-guanine phosphoribosyltransferase (168 aa).

5-phospho-alpha-D-ribose 1-diphosphate-binding positions include 43-44 and 102-110; these read RG and DDLVDTGAT. D103 is a binding site for Mg(2+). The guanine site is built by D106 and I149. Xanthine contacts are provided by D106 and I149. Residues 106-110 and 148-149 each bind GMP; these read DTGAT and WI.

The protein belongs to the purine/pyrimidine phosphoribosyltransferase family. XGPT subfamily. Homotetramer. Requires Mg(2+) as cofactor.

It is found in the cell inner membrane. The catalysed reaction is GMP + diphosphate = guanine + 5-phospho-alpha-D-ribose 1-diphosphate. It catalyses the reaction XMP + diphosphate = xanthine + 5-phospho-alpha-D-ribose 1-diphosphate. It carries out the reaction IMP + diphosphate = hypoxanthine + 5-phospho-alpha-D-ribose 1-diphosphate. It functions in the pathway purine metabolism; GMP biosynthesis via salvage pathway; GMP from guanine: step 1/1. It participates in purine metabolism; XMP biosynthesis via salvage pathway; XMP from xanthine: step 1/1. Functionally, purine salvage pathway enzyme that catalyzes the transfer of the ribosyl-5-phosphate group from 5-phospho-alpha-D-ribose 1-diphosphate (PRPP) to the N9 position of the 6-oxopurines guanine and xanthine to form the corresponding ribonucleotides GMP (guanosine 5'-monophosphate) and XMP (xanthosine 5'-monophosphate), with the release of PPi. To a lesser extent, also acts on hypoxanthine. The sequence is that of Xanthine-guanine phosphoribosyltransferase from Nitrobacter hamburgensis (strain DSM 10229 / NCIMB 13809 / X14).